Consider the following 560-residue polypeptide: 2-succinylbenzoate--CoA ligase, chloroplastic/peroxisomal (560 aa).

Residues 1-15 (MANHSRPHICQCLTR) constitute a chloroplast transit peptide. The next 3 membrane-spanning stretches (helical) occupy residues 69-89 (LFLE…PLNY), 189-209 (GVTI…AIAG), and 225-245 (IGGL…VLLP). Positions 558–560 (SSL) match the Microbody targeting signal motif.

Belongs to the ATP-dependent AMP-binding enzyme family. MenE subfamily. In terms of tissue distribution, high expression in young leaves and flowers. Not expressed in roots.

The protein localises to the plastid. It is found in the chloroplast membrane. The protein resides in the peroxisome membrane. The enzyme catalyses 2-succinylbenzoate + ATP + CoA = 2-succinylbenzoyl-CoA + AMP + diphosphate. Involved in the biosynthesis of phylloquinone (vitamin K1). Converts 2-succinylbenzoate (OSB) to 2-succinylbenzoyl-CoA (OSB-CoA). This chain is 2-succinylbenzoate--CoA ligase, chloroplastic/peroxisomal (AAE14), found in Arabidopsis thaliana (Mouse-ear cress).